A 280-amino-acid polypeptide reads, in one-letter code: Phosphatidylserine decarboxylase proenzyme (280 aa).

Residues D88, H144, and S247 each act as charge relay system; for autoendoproteolytic cleavage activity in the active site. S247 functions as the Schiff-base intermediate with substrate; via pyruvic acid; for decarboxylase activity in the catalytic mechanism. Residue S247 is modified to Pyruvic acid (Ser); by autocatalysis.

It belongs to the phosphatidylserine decarboxylase family. PSD-B subfamily. Prokaryotic type I sub-subfamily. In terms of assembly, heterodimer of a large membrane-associated beta subunit and a small pyruvoyl-containing alpha subunit. Requires pyruvate as cofactor. Post-translationally, is synthesized initially as an inactive proenzyme. Formation of the active enzyme involves a self-maturation process in which the active site pyruvoyl group is generated from an internal serine residue via an autocatalytic post-translational modification. Two non-identical subunits are generated from the proenzyme in this reaction, and the pyruvate is formed at the N-terminus of the alpha chain, which is derived from the carboxyl end of the proenzyme. The autoendoproteolytic cleavage occurs by a canonical serine protease mechanism, in which the side chain hydroxyl group of the serine supplies its oxygen atom to form the C-terminus of the beta chain, while the remainder of the serine residue undergoes an oxidative deamination to produce ammonia and the pyruvoyl prosthetic group on the alpha chain. During this reaction, the Ser that is part of the protease active site of the proenzyme becomes the pyruvoyl prosthetic group, which constitutes an essential element of the active site of the mature decarboxylase.

The protein localises to the cell membrane. It catalyses the reaction a 1,2-diacyl-sn-glycero-3-phospho-L-serine + H(+) = a 1,2-diacyl-sn-glycero-3-phosphoethanolamine + CO2. It functions in the pathway phospholipid metabolism; phosphatidylethanolamine biosynthesis; phosphatidylethanolamine from CDP-diacylglycerol: step 2/2. Catalyzes the formation of phosphatidylethanolamine (PtdEtn) from phosphatidylserine (PtdSer). The sequence is that of Phosphatidylserine decarboxylase proenzyme from Xanthomonas axonopodis pv. citri (strain 306).